The primary structure comprises 725 residues: Glutamine-dependent NAD(+) synthetase (725 aa).

The 271-residue stretch at 5–275 (VTVATCALNQ…VEVLTATLDL (271 aa)) folds into the CN hydrolase domain. The active-site Proton acceptor; for glutaminase activity is the Glu-45. Lys-114 (for glutaminase activity) is an active-site residue. The active-site Nucleophile; for glutaminase activity is the Cys-175. The interval 325-706 (YHRPEEEISL…KASQTREEQV (382 aa)) is ligase. ATP is bound at residue 355–362 (PLSGGVDS). Ser-357 is a catalytic residue.

In the C-terminal section; belongs to the NAD synthetase family. As to quaternary structure, homohexamer. Highly expressed in small intestine, kidney, liver and testis. Weakly expressed in skeletal muscle, spleen, lung, heart and brain.

It catalyses the reaction deamido-NAD(+) + L-glutamine + ATP + H2O = L-glutamate + AMP + diphosphate + NAD(+) + H(+). Its pathway is cofactor biosynthesis; NAD(+) biosynthesis; NAD(+) from deamido-NAD(+) (L-Gln route): step 1/1. In terms of biological role, catalyzes the final step of the nicotinamide adenine dinucleotide (NAD) de novo synthesis pathway, the ATP-dependent amidation of deamido-NAD using L-glutamine as a nitrogen source. This is Glutamine-dependent NAD(+) synthetase (Nadsyn1) from Mus musculus (Mouse).